The primary structure comprises 359 residues: UDP-N-acetylglucosamine--N-acetylmuramyl-(pentapeptide) pyrophosphoryl-undecaprenol N-acetylglucosamine transferase (359 aa).

UDP-N-acetyl-alpha-D-glucosamine contacts are provided by residues 15 to 17, Asn-127, Arg-166, Ser-191, Ile-245, 264 to 269, and Gln-290; these read TGG and ALTVSE.

This sequence belongs to the glycosyltransferase 28 family. MurG subfamily.

It is found in the cell inner membrane. It carries out the reaction di-trans,octa-cis-undecaprenyl diphospho-N-acetyl-alpha-D-muramoyl-L-alanyl-D-glutamyl-meso-2,6-diaminopimeloyl-D-alanyl-D-alanine + UDP-N-acetyl-alpha-D-glucosamine = di-trans,octa-cis-undecaprenyl diphospho-[N-acetyl-alpha-D-glucosaminyl-(1-&gt;4)]-N-acetyl-alpha-D-muramoyl-L-alanyl-D-glutamyl-meso-2,6-diaminopimeloyl-D-alanyl-D-alanine + UDP + H(+). Its pathway is cell wall biogenesis; peptidoglycan biosynthesis. Functionally, cell wall formation. Catalyzes the transfer of a GlcNAc subunit on undecaprenyl-pyrophosphoryl-MurNAc-pentapeptide (lipid intermediate I) to form undecaprenyl-pyrophosphoryl-MurNAc-(pentapeptide)GlcNAc (lipid intermediate II). This is UDP-N-acetylglucosamine--N-acetylmuramyl-(pentapeptide) pyrophosphoryl-undecaprenol N-acetylglucosamine transferase from Pseudomonas putida (strain GB-1).